The following is a 178-amino-acid chain: Protein GrpE (178 aa).

This sequence belongs to the GrpE family. Homodimer.

It localises to the cytoplasm. Participates actively in the response to hyperosmotic and heat shock by preventing the aggregation of stress-denatured proteins, in association with DnaK and GrpE. It is the nucleotide exchange factor for DnaK and may function as a thermosensor. Unfolded proteins bind initially to DnaJ; upon interaction with the DnaJ-bound protein, DnaK hydrolyzes its bound ATP, resulting in the formation of a stable complex. GrpE releases ADP from DnaK; ATP binding to DnaK triggers the release of the substrate protein, thus completing the reaction cycle. Several rounds of ATP-dependent interactions between DnaJ, DnaK and GrpE are required for fully efficient folding. The protein is Protein GrpE of Rickettsia africae (strain ESF-5).